Consider the following 88-residue polypeptide: Cell division topological specificity factor (88 aa).

This sequence belongs to the MinE family.

Prevents the cell division inhibition by proteins MinC and MinD at internal division sites while permitting inhibition at polar sites. This ensures cell division at the proper site by restricting the formation of a division septum at the midpoint of the long axis of the cell. This Escherichia coli (strain SMS-3-5 / SECEC) protein is Cell division topological specificity factor.